The following is a 164-amino-acid chain: Transcription factor E (164 aa).

An HTH TFE/IIEalpha-type domain is found at 5–87 (NDKVIRGYLL…LWRLDFSDIE (83 aa)).

This sequence belongs to the TFE family. Monomer. Interaction with RNA polymerase subunits RpoF and RpoE is necessary for Tfe stimulatory transcription activity. Able to interact with Tbp and RNA polymerase in the absence of DNA promoter. Interacts both with the preinitiation and elongation complexes.

Transcription factor that plays a role in the activation of archaeal genes transcribed by RNA polymerase. Facilitates transcription initiation by enhancing TATA-box recognition by TATA-box-binding protein (Tbp), and transcription factor B (Tfb) and RNA polymerase recruitment. Not absolutely required for transcription in vitro, but particularly important in cases where Tbp or Tfb function is not optimal. It dynamically alters the nucleic acid-binding properties of RNA polymerases by stabilizing the initiation complex and destabilizing elongation complexes. Seems to translocate with the RNA polymerase following initiation and acts by binding to the non template strand of the transcription bubble in elongation complexes. The polypeptide is Transcription factor E (Methanosarcina barkeri (strain Fusaro / DSM 804)).